A 517-amino-acid polypeptide reads, in one-letter code: Serine O-succinyltransferase (517 aa).

The N-terminal 46 residues, 1 to 46 (MSPLNGVARSLPRPFQAVARRPFRVAQPAVACPSNRRSFNHSRSLR), are a transit peptide targeting the mitochondrion. Positions 34-66 (SNRRSFNHSRSLRSTGSQSPAPSPRDSSNPALS) are disordered. Residues 45 to 64 (LRSTGSQSPAPSPRDSSNPA) are compositionally biased toward polar residues. In terms of domain architecture, AB hydrolase-1 spans 134 to 386 (NVILLHTGLS…LTQQLATKKQ (253 aa)). The interval 141–144 (GLSA) is important for substrate specificity. Ser-238 acts as the Nucleophile in catalysis. Arg-307 is a binding site for substrate. Positions 413 to 436 (QPYQEQPSASTSAEQSASASETGS) are disordered. Over residues 416 to 436 (QEQPSASTSAEQSASASETGS) the composition is skewed to low complexity. Catalysis depends on residues Asp-461 and His-498. Substrate is bound at residue Asp-499.

It belongs to the AB hydrolase superfamily. MetX family.

Its subcellular location is the mitochondrion. It catalyses the reaction succinyl-CoA + L-serine = O-succinyl-L-serine + CoA. The protein operates within amino-acid biosynthesis; L-cysteine biosynthesis; L-cysteine from L-serine: step 1/2. Its function is as follows. Transfers a succinyl group from succinyl-CoA to L-serine, forming succinyl-L-serine. Also has weak serine acetyl transferase activity and homoserine succinyl transferase activity. The sequence is that of Serine O-succinyltransferase from Emericella nidulans (Aspergillus nidulans).